Here is a 397-residue protein sequence, read N- to C-terminus: Ribosomal RNA large subunit methyltransferase I (397 aa).

The PUA domain occupies 2–80 (AIRIKLKPGR…KEETIDADFF (79 aa)).

It belongs to the methyltransferase superfamily. RlmI family.

It is found in the cytoplasm. It carries out the reaction cytidine(1962) in 23S rRNA + S-adenosyl-L-methionine = 5-methylcytidine(1962) in 23S rRNA + S-adenosyl-L-homocysteine + H(+). Specifically methylates the cytosine at position 1962 (m5C1962) of 23S rRNA. The polypeptide is Ribosomal RNA large subunit methyltransferase I (Shewanella frigidimarina (strain NCIMB 400)).